The primary structure comprises 607 residues: Pescadillo homolog (607 aa).

One can recognise a BRCT domain in the interval Lys-320–Ile-413. The interval Glu-486–Lys-607 is disordered. The span at Glu-495–Glu-511 shows a compositional bias: acidic residues. The segment covering Ile-530–Arg-549 has biased composition (basic and acidic residues). A compositionally biased stretch (basic residues) spans Arg-551 to Arg-562. Positions Lys-563 to Lys-607 are enriched in basic and acidic residues.

The protein belongs to the pescadillo family.

The protein localises to the nucleus. It is found in the nucleolus. The protein resides in the nucleoplasm. Functionally, required for maturation of ribosomal RNAs and formation of the large ribosomal subunit. In Culex quinquefasciatus (Southern house mosquito), this protein is Pescadillo homolog.